The following is a 488-amino-acid chain: N-succinylglutamate 5-semialdehyde dehydrogenase 2 (488 aa).

221–226 (GSSNTG) is a binding site for NAD(+). Residues E244 and C278 contribute to the active site.

Belongs to the aldehyde dehydrogenase family. AstD subfamily.

It catalyses the reaction N-succinyl-L-glutamate 5-semialdehyde + NAD(+) + H2O = N-succinyl-L-glutamate + NADH + 2 H(+). Its pathway is amino-acid degradation; L-arginine degradation via AST pathway; L-glutamate and succinate from L-arginine: step 4/5. Its function is as follows. Catalyzes the NAD-dependent reduction of succinylglutamate semialdehyde into succinylglutamate. This is N-succinylglutamate 5-semialdehyde dehydrogenase 2 from Pseudoalteromonas translucida (strain TAC 125).